The following is a 399-amino-acid chain: MLLTVYCVRRDLSEVTFSLQVDADFELHNFRALCELESGIPAAESQIVYAERPLTDNHRSLASYGLKDGDVVILRQKENADPRPPVQFPNLPRIDFSSIAVPGTSSPRQRQPPGTQQSHSSPGEITSSPQGLDNPALLRDMLLANPHELSLLKERNPPLAEALLSGDLEKFSRVLVEQQQDRARREQERIRLFSADPFDLEAQAKIEEDIRQQNIEENMTIAMEEAPESFGQVVMLYINCKVNGHPVKAFVDSGAQMTIMSQACAERCNIMRLVDRRWAGIAKGVGTQKIIGRVHLAQVQIEGDFLPCSFSILEEQPMDMLLGLDMLKRHQCSIDLKKNVLVIGTTGSQTTFLPEGELPECARLAYGAGREDVRPEEIADQELAEALQKSAEDAERQKP.

Residues 1–81 enclose the Ubiquitin-like domain; that stretch reads MLLTVYCVRR…VILRQKENAD (81 aa). The segment at 99–134 is disordered; sequence IAVPGTSSPRQRQPPGTQQSHSSPGEITSSPQGLDN. Positions 103–131 are enriched in polar residues; that stretch reads GTSSPRQRQPPGTQQSHSSPGEITSSPQG. Threonine 104 carries the post-translational modification Phosphothreonine. Serine 106, serine 121, serine 128, serine 150, and serine 194 each carry phosphoserine. Aspartate 252 is an active-site residue. Positions 376–395 match the Ubiquitin-binding motif; sequence EEIADQELAEALQKSAEDAE.

The protein belongs to the DDI1 family. In terms of assembly, homodimer. Interacts with MCM6; PCNA; PSMD4; PSMD8; RPA2 and RPN2. Interacts with RTF2.

The protein resides in the cytoplasm. It is found in the cytosol. It localises to the chromosome. Aspartic protease that mediates the cleavage of NFE2L1/NRF1 at 'Leu-104', thereby promoting release of NFE2L1/NRF1 from the endoplasmic reticulum membrane. Ubiquitination of NFE2L1/NRF1 is a prerequisite for cleavage, suggesting that DDI2 specifically recognizes and binds ubiquitinated NFE2L1/NRF1. Seems to act as a proteasomal shuttle which links the proteasome and replication fork proteins like RTF2. Required, with DDI1, for cellular survival following replication stress. Together or redudantly with DDI1, removes RTF2 from stalled forks to allow cell cycle progression after replication stress and maintains genome integrity. The protein is Protein DDI1 homolog 2 of Homo sapiens (Human).